A 202-amino-acid chain; its full sequence is UPF0301 protein Meso_0753 (202 aa).

The protein belongs to the UPF0301 (AlgH) family.

The sequence is that of UPF0301 protein Meso_0753 from Chelativorans sp. (strain BNC1).